The chain runs to 278 residues: NH(3)-dependent NAD(+) synthetase (278 aa).

39–46 (GVSGGVDS) provides a ligand contact to ATP. D45 is a Mg(2+) binding site. Residue R121 participates in deamido-NAD(+) binding. T141 is a binding site for ATP. E146 contributes to the Mg(2+) binding site. Residues K154 and D161 each contribute to the deamido-NAD(+) site. ATP-binding residues include K170 and S192. 252 to 253 (HK) is a deamido-NAD(+) binding site.

This sequence belongs to the NAD synthetase family. As to quaternary structure, homodimer.

It carries out the reaction deamido-NAD(+) + NH4(+) + ATP = AMP + diphosphate + NAD(+) + H(+). Its pathway is cofactor biosynthesis; NAD(+) biosynthesis; NAD(+) from deamido-NAD(+) (ammonia route): step 1/1. Its function is as follows. Catalyzes the ATP-dependent amidation of deamido-NAD to form NAD. Uses ammonia as a nitrogen source. This chain is NH(3)-dependent NAD(+) synthetase, found in Saccharolobus solfataricus (strain ATCC 35092 / DSM 1617 / JCM 11322 / P2) (Sulfolobus solfataricus).